A 62-amino-acid chain; its full sequence is Large ribosomal subunit protein uL30 (62 aa).

This sequence belongs to the universal ribosomal protein uL30 family. In terms of assembly, part of the 50S ribosomal subunit.

The protein is Large ribosomal subunit protein uL30 of Paracoccus denitrificans (strain Pd 1222).